Here is a 405-residue protein sequence, read N- to C-terminus: Dematin (405 aa).

Disordered regions lie at residues 1–30, 79–158, 173–192, and 203–332; these read MERL…PSSI, PRSR…GSPQ, FPAA…TDYW, and TEWR…DRGN. Positions 11–29 are enriched in low complexity; it reads SPGSVSPSRDSSVPGSPSS. 9 positions are modified to phosphoserine: serine 16, serine 18, serine 26, serine 92, serine 96, serine 105, serine 110, serine 113, and serine 156. The span at 108–123 shows a compositional bias: polar residues; that stretch reads IISQASAPRTTGTPRT. A compositionally biased stretch (acidic residues) spans 216 to 227; the sequence is EEEEEEEDDDSG. The interval 224-308 is interaction with RASGRF2; that stretch reads DDSGEEMKAL…SRLQSTEFSP (85 aa). At serine 226 the chain carries Phosphoserine. Basic and acidic residues-rich tracts occupy residues 228-242 and 252-261; these read EEMK…EELS and ILKEEMEKSL. Phosphoserine occurs at positions 269, 279, 289, 303, 315, 333, 372, and 383. The span at 276-322 shows a compositional bias: polar residues; sequence FHTSLHQGTSKSSSLPAYGRTTLSRLQSTEFSPSGSETGSPGLQNGE. In terms of domain architecture, HP spans 337 to 405; that stretch reads VLEQKIYPYE…NELKKKASLF (69 aa). Serine 403 is modified (phosphoserine; by PKA).

It belongs to the villin/gelsolin family. As to quaternary structure, monomeric (isoform 2); under reducing conditions. Self-associates. Exists under oxidizing condition as a trimer of two isoforms 2 and isoform 1 linked by disulfide bonds. Found in a complex with DMTN, F-actin and spectrin. Found in a complex with ADD2, DMTN and SLC2A1. Interacts with F-actin, ITPKB, RASGRF2 and spectrin. Isoform 2 interacts with SLC2A1 (via C-terminus cytoplasmic region). Isoform 1 and isoform 2 interact (phosphorylated form) with plasmodium berghei 14-3-3 protein; the interaction occurs in a PKA-dependent manner. Phosphorylated. Phosphorylation at Ser-403 by PKA causes the C-terminal headpiece domain to associate with the N-terminal core domain, and leads to the inhibition of its actin bundling activity. In terms of processing, the N-terminus is blocked. Expressed in platelets (at protein level). Expressed in heart, brain, lung, skeletal muscle, and kidney.

Its subcellular location is the cytoplasm. The protein localises to the cytosol. It localises to the perinuclear region. It is found in the cytoskeleton. The protein resides in the cell membrane. Its subcellular location is the membrane. The protein localises to the endomembrane system. It localises to the cell projection. Functionally, membrane-cytoskeleton-associated protein with F-actin-binding activity that induces F-actin bundles formation and stabilization. Its F-actin-bundling activity is reversibly regulated upon its phosphorylation by the cAMP-dependent protein kinase A (PKA). Binds to the erythrocyte membrane glucose transporter-1 SLC2A1/GLUT1, and hence stabilizes and attaches the spectrin-actin network to the erythrocytic plasma membrane. Plays a role in maintaining the functional integrity of PKA-activated erythrocyte shape and the membrane mechanical properties. Also plays a role as a modulator of actin dynamics in fibroblasts; acts as a negative regulator of the RhoA activation pathway. In platelets, functions as a regulator of internal calcium mobilization across the dense tubular system that affects platelet granule secretion pathways and aggregation. Also required for the formation of a diverse set of cell protrusions, such as filopodia and lamellipodia, necessary for platelet cell spreading, motility and migration. Acts as a tumor suppressor and inhibits malignant cell transformation. The protein is Dematin (DMTN) of Homo sapiens (Human).